The following is a 364-amino-acid chain: MSILNLVRADLLNSQNYVPGGESARYRSHANELPWSPVTMGEYNLNYYPNIGLQIELQKQLAKRYQINSDQIILTRGSDDGIDLTTRLFLTAGKDAFMQFPPTFPMYAFYVRLQQAELIECPLDRRTNFRLTLDQIENSWKPNCKVIMFCSPNNPTGNLVDLNLIAKTCELYTNQSIIVVDEAYIEFANAPSATSLIGEFENLIVLRTLSKAFGLAGLRLGCIIAQSPIIQAFNKIIAPYSIATPSMELAKRALNNSDWFTKTIEQIKSSRAWVIKKFADNPIIEKIYPTETNFILIQTRFSKQLATWLARYGIAVRDFPSSSLLHDHLRITVGHDEQNQLLIDALSSFNADVAGLNYEKDFIY.

An N6-(pyridoxal phosphate)lysine modification is found at lysine 211.

It belongs to the class-II pyridoxal-phosphate-dependent aminotransferase family. Histidinol-phosphate aminotransferase subfamily. Homodimer. It depends on pyridoxal 5'-phosphate as a cofactor.

It catalyses the reaction L-histidinol phosphate + 2-oxoglutarate = 3-(imidazol-4-yl)-2-oxopropyl phosphate + L-glutamate. The protein operates within amino-acid biosynthesis; L-histidine biosynthesis; L-histidine from 5-phospho-alpha-D-ribose 1-diphosphate: step 7/9. This is Histidinol-phosphate aminotransferase 1 from Legionella pneumophila (strain Lens).